Consider the following 808-residue polypeptide: MQRWPKYGGTDVNTRTVHDLLNTINTMSARIKTLERYEHALREIHKVVVILKPSANTHSFEPDALPALIMQFLSDFAGRDINTLTHNINYKYDYNYPPAPVPAMQPPPPPPQPPAPPQPPYYNNYPYYPPYPFSTPPPTQPPESNVAGVGGSQSLNQITLTNEEESELAALFKNMQTNMTWELVQNFVEVLIRIVRVHVVNNVTMINVISSITSVRTLIDYNFTEFIRCVYQKTNIRFAIDQYLCTNIVTFIDFFTRVFYLVMRTNFQFTTFDQLTQYSNELYTRIQTSILQSAAPLSPPTVETVNSDIVISNLQEQLKRERALMQQISEQHRIANERVETLQSQYDELDLKYKEIFEDKSEFAQQKSENVRKIKQLERSNKELNDTVQKLRDENAERLSEIQLQKGDLDEYKNMNRQLNEDIYKLKRRIESTFDKDYVETLNDKIESLEKQLDDKQNLNRELRSSISKIDETTQRYKLDAKDIMELKQSVSIKDQEIAMKNAQYLELSAIYQQTVNELTATKNELSQVATTNQSLFAENEESKVLLEGTLAFIDSFYQIIMQIEKPDYVPISKPQLTAQESIYQTDYIKDWLQKLRSKLSNADVANLQSVSELSDLKSQIISIVPRNIVNRILKENYKVKVENVNAELLESVAVTSAVSALVQQYERSEKQNVKLRQEFEIKLNDLQRLLEQNQTDFESISEFISRDPAFNRNLNDERFQNLRQQYDEMSSKYSALETTKIKEMESIADQAVKSEMSKLNTQLDELNSLFVKYNRKAQDIFEWKTSMLKRYETLARTTAASVQPNVE.

Residues 132 to 141 (PFSTPPPTQP) are compositionally biased toward pro residues. The interval 132–151 (PFSTPPPTQPPESNVAGVGG) is disordered.

In terms of assembly, interacts with the putative E3 ligase IE0 and with viral ubiquitin/vUbi.

Its subcellular location is the host nucleus. It localises to the host cytoplasm. Its function is as follows. Plays an essential role in the efficient egress of nucleocapsids from the host nucleus to the cytoplasm. In Lepidoptera (butterflies and moths), this protein is Protein Ac66 (Ac66).